A 203-amino-acid chain; its full sequence is Glutathione S-transferase 2 (203 aa).

The 78-residue stretch at 1–78 (MPKVVFHYFG…YLGRKYGLAG (78 aa)) folds into the GST N-terminal domain. Residues Tyr-8, Trp-38, Lys-42, 48-50 (GQM), and 62-63 (QS) each bind glutathione. Residues 80 to 203 (DIEEDFEIDQ…YLDSAPKKEF (124 aa)) enclose the GST C-terminal domain.

This sequence belongs to the GST superfamily. Sigma family. As to quaternary structure, homodimer.

It carries out the reaction RX + glutathione = an S-substituted glutathione + a halide anion + H(+). Conjugation of reduced glutathione to a wide number of exogenous and endogenous hydrophobic electrophiles. This Manduca sexta (Tobacco hawkmoth) protein is Glutathione S-transferase 2 (GST2).